A 340-amino-acid polypeptide reads, in one-letter code: Uroporphyrinogen decarboxylase (340 aa).

Substrate-binding positions include 23–27 (RQAGR), Asp72, Tyr147, Thr202, and His316.

The protein belongs to the uroporphyrinogen decarboxylase family. In terms of assembly, homodimer.

It localises to the cytoplasm. It carries out the reaction uroporphyrinogen III + 4 H(+) = coproporphyrinogen III + 4 CO2. It functions in the pathway porphyrin-containing compound metabolism; protoporphyrin-IX biosynthesis; coproporphyrinogen-III from 5-aminolevulinate: step 4/4. In terms of biological role, catalyzes the decarboxylation of four acetate groups of uroporphyrinogen-III to yield coproporphyrinogen-III. The sequence is that of Uroporphyrinogen decarboxylase from Geobacter metallireducens (strain ATCC 53774 / DSM 7210 / GS-15).